Consider the following 510-residue polypeptide: Inositol-3-phosphate synthase (510 aa).

Residues glycine 70, glycine 71, asparagine 72, asparagine 73, aspartate 143, isoleucine 180, glutamine 190, arginine 193, threonine 230, alanine 231, asparagine 232, threonine 233, glycine 281, serine 282, aspartate 306, serine 309, asparagine 340, asparagine 341, aspartate 342, lysine 355, alanine 393, aspartate 394, aspartate 422, and serine 423 each coordinate NAD(+).

Belongs to the myo-inositol 1-phosphate synthase family. It depends on NAD(+) as a cofactor.

It localises to the cytoplasm. It is found in the cytosol. The protein resides in the nucleus. The enzyme catalyses D-glucose 6-phosphate = 1D-myo-inositol 3-phosphate. It functions in the pathway polyol metabolism; myo-inositol biosynthesis; myo-inositol from D-glucose 6-phosphate: step 1/2. Functionally, key enzyme in myo-inositol biosynthesis pathway that catalyzes the conversion of glucose 6-phosphate to 1-myo-inositol 1-phosphate in a NAD-dependent manner. This chain is Inositol-3-phosphate synthase, found in Brassica napus (Rape).